The chain runs to 374 residues: Organelle RRM domain-containing protein 1, chloroplastic (374 aa).

Residues 1–54 (MEALIASTSFFVPISNSSSSHIINNRFFPSFYSPNLNFGTFRKTSLSSSHLVFS) constitute a chloroplast transit peptide. Positions 258–271 (KDYEGDSTQDSRDQ) are enriched in basic and acidic residues. Residues 258–279 (KDYEGDSTQDSRDQDDSESPPV) form a disordered region. One can recognise an RRM domain in the interval 282–360 (KKLFITGLSF…WMIVVDVAKT (79 aa)).

Interacts with PCMP-H51/CRR28 and PCMP-H12/OTP82. Interacts with MORF8/RIP1, MORF2/RIP2 and VAR3/OZ1.

Its subcellular location is the plastid. The protein localises to the chloroplast. Functionally, involved in C-to-U editing of chloroplastic RNA. Functions as major chloroplastic editing factor. Controls 62 percent of the chloroplastic editing sites. Binds RNA close to ORRM1-dependent editing sites in vitro. Binds the editing recognition trans-factors PCMP-H51/CRR28 and PCMP-H12/OTP82. The polypeptide is Organelle RRM domain-containing protein 1, chloroplastic (Arabidopsis thaliana (Mouse-ear cress)).